Here is a 360-residue protein sequence, read N- to C-terminus: Actin-like protein MamK (360 aa).

ATP-binding positions include K22, 33-34, and D89; that span reads TS. E156 serves as a coordination point for Mg(2+). Residues 177-179, 231-235, and G302 each bind ATP; these read AGT and KEQFS.

Belongs to the FtsA/MreB family. MamK subfamily. Forms cytoplasmic filaments. Interacts with MamJ. Forms filaments in the absence of other magnetosome proteins and in E.coli. Filament formation in vitro requires ATP, GTP or a non-hydrolyzable ATP analog.

It localises to the cytoplasm. The protein localises to the cytoskeleton. The catalysed reaction is ATP + H2O = ADP + phosphate + H(+). Its activity is regulated as follows. Filament dynamics depend partially on MamJ. Functionally, protein with ATPase activity which forms dynamic cytoplasmic filaments that are involved in sorting, concatenating and/or correctly positioning of magnetosomes in the cell. Not absolutely necessary for assembly of short chains. Filaments grow from the both cell poles towards midcell, and are probably disassembled at the other end of the cell, a process known as treadmilling. Polymerizes in the presence of ATP, GTP or a non-hydrolyzable ATP analog. Required for correct segregation and positioning of magnetosomes following cell division. The chain is Actin-like protein MamK from Magnetospirillum gryphiswaldense (strain DSM 6361 / JCM 21280 / NBRC 15271 / MSR-1).